Here is a 293-residue protein sequence, read N- to C-terminus: Ribosomal protein L11 methyltransferase (293 aa).

The S-adenosyl-L-methionine site is built by T145, G166, D188, and N230.

The protein belongs to the methyltransferase superfamily. PrmA family.

It localises to the cytoplasm. It carries out the reaction L-lysyl-[protein] + 3 S-adenosyl-L-methionine = N(6),N(6),N(6)-trimethyl-L-lysyl-[protein] + 3 S-adenosyl-L-homocysteine + 3 H(+). Its function is as follows. Methylates ribosomal protein L11. The chain is Ribosomal protein L11 methyltransferase from Shewanella baltica (strain OS223).